A 499-amino-acid chain; its full sequence is Serine carboxypeptidase 1 (499 aa).

The signal sequence occupies residues 1 to 30; that stretch reads MARCRRRSGCTAGAALLLLLALALSGGGGA. 3 disulfide bridges follow: C92/C388, C256/C268, and C291/C355. Residue N148 is glycosylated (N-linked (GlcNAc...) asparagine). S188 is an active-site residue. An N-linked (GlcNAc...) asparagine glycan is attached at N262. Residues 297-351 constitute a propeptide, linker peptide; the sequence is IKEVNLQNSKLPQSFKDLGTTNKPFPVRTRMLGRAWPLRAPVKAGRVPSWQEVAS. N-linked (GlcNAc...) asparagine glycosylation is present at N407. Active-site residues include D423 and H476. The Microbody targeting signal motif lies at 497–499; that stretch reads SKL.

This sequence belongs to the peptidase S10 family. As to quaternary structure, carboxypeptidase I is a dimer, where each monomer is composed of two chains linked by disulfide bonds. The linker peptide is endoproteolytically excised during enzyme maturation.

It is found in the secreted. It catalyses the reaction Release of a C-terminal amino acid with broad specificity.. Its function is as follows. May be involved in the degradation of small peptides (2-5 residues) or in the degradation of storage proteins in the embryo. The protein is Serine carboxypeptidase 1 (CBP1) of Hordeum vulgare (Barley).